A 272-amino-acid chain; its full sequence is Putative hydro-lyase RPD_1846 (272 aa).

The protein belongs to the D-glutamate cyclase family.

The protein is Putative hydro-lyase RPD_1846 of Rhodopseudomonas palustris (strain BisB5).